A 391-amino-acid polypeptide reads, in one-letter code: Transforming growth factor beta-1 proprotein (391 aa).

The signal sequence occupies residues 1–18; the sequence is MDPSPLLALLLLLGAARA. The segment at 19-63 is straightjacket domain; it reads LSTCQRLDLEAAKKKRIEAVRGQILSKLRLTAPPPASETPPRPLP. Residues 64–270 are arm domain; sequence DDVRALYNST…ALPAERANEL (207 aa). Asn-71, Asn-126, and Asn-171 each carry an N-linked (GlcNAc...) asparagine glycan. The bowtie tail stretch occupies residues 221–249; that stretch reads EMGPGHADEMRISIEGFEQQRGDMQSIAK. Positions 241 to 243 match the Cell attachment site motif; the sequence is RGD. Intrachain disulfides connect Cys-284-Cys-295, Cys-294-Cys-357, Cys-323-Cys-388, and Cys-327-Cys-390.

This sequence belongs to the TGF-beta family. As to quaternary structure, latency-associated peptide: Homodimer; disulfide-linked. Latency-associated peptide: Interacts with Transforming growth factor beta-1 (TGF-beta-1) chain; interaction is non-covalent and maintains (TGF-beta-1) in a latent state; each Latency-associated peptide (LAP) monomer interacts with TGF-beta-1 in the other monomer. Transforming growth factor beta-1: Homodimer; disulfide-linked. Transforming growth factor beta-1: Interacts with TGF-beta receptors (TGFBR1 and TGFBR2), leading to signal transduction. In terms of processing, transforming growth factor beta-1 proprotein: The precursor proprotein is cleaved in the Golgi apparatus to form Transforming growth factor beta-1 (TGF-beta-1) and Latency-associated peptide (LAP) chains, which remain non-covalently linked, rendering TGF-beta-1 inactive.

The protein localises to the secreted. The protein resides in the extracellular space. It is found in the extracellular matrix. Transforming growth factor beta-1 proprotein: Precursor of the Latency-associated peptide (LAP) and Transforming growth factor beta-1 (TGF-beta-1) chains, which constitute the regulatory and active subunit of TGF-beta-1, respectively. Functionally, required to maintain the Transforming growth factor beta-1 (TGF-beta-1) chain in a latent state during storage in extracellular matrix. Associates non-covalently with TGF-beta-1 and regulates its activation via interaction with 'milieu molecules', such as LTBP1, LRRC32/GARP and LRRC33/NRROS, that control activation of TGF-beta-1. Interaction with integrins (ITGAV:ITGB6 or ITGAV:ITGB8) results in distortion of the Latency-associated peptide chain and subsequent release of the active TGF-beta-1. Its function is as follows. Transforming growth factor beta-1: Multifunctional protein that regulates the growth and differentiation of various cell types and is involved in various processes, such as normal development, immune function, microglia function and responses to neurodegeneration. Activation into mature form follows different steps: following cleavage of the proprotein in the Golgi apparatus, Latency-associated peptide (LAP) and Transforming growth factor beta-1 (TGF-beta-1) chains remain non-covalently linked rendering TGF-beta-1 inactive during storage in extracellular matrix. At the same time, LAP chain interacts with 'milieu molecules', such as LTBP1, LRRC32/GARP and LRRC33/NRROS that control activation of TGF-beta-1 and maintain it in a latent state during storage in extracellular milieus. TGF-beta-1 is released from LAP by integrins (ITGAV:ITGB6 or ITGAV:ITGB8): integrin-binding to LAP stabilizes an alternative conformation of the LAP bowtie tail and results in distortion of the LAP chain and subsequent release of the active TGF-beta-1. Once activated following release of LAP, TGF-beta-1 acts by binding to TGF-beta receptors (TGFBR1 and TGFBR2), which transduce signal. While expressed by many cells types, TGF-beta-1 only has a very localized range of action within cell environment thanks to fine regulation of its activation by Latency-associated peptide chain (LAP) and 'milieu molecules'. Plays an important role in bone remodeling: acts as a potent stimulator of osteoblastic bone formation. Can promote either T-helper 17 cells (Th17) or regulatory T-cells (Treg) lineage differentiation in a concentration-dependent manner. Can induce epithelial-to-mesenchymal transition (EMT) and cell migration in various cell types. This is Transforming growth factor beta-1 proprotein (TGFB1) from Gallus gallus (Chicken).